The following is a 4646-amino-acid chain: Cytoplasmic dynein 1 heavy chain 1 (4646 aa).

Ser2 carries the N-acetylserine modification. Positions 53 to 1867 are stem; the sequence is EAALEEKSAL…SIQMANAKFN (1815 aa). Ser70 is modified (phosphoserine). 3 coiled-coil regions span residues 181 to 202, 455 to 478, and 543 to 566; these read SVEKKIAELEMGLLHLQQNIEI, AHRKLQARLDQMRKFRRQHEQLRA, and TEAWEAAMKRYDERIDRVETRITA. The interaction with DYNC1I2 stretch occupies residues 448 to 703; the sequence is MVWRINPAHR…NTQEIFDDWA (256 aa). The segment at 651 to 802 is interaction with DYNC1LI2; the sequence is AKQIDRQLTA…EKVEERNTIS (152 aa). Residue Lys1125 is modified to N6-acetyllysine. 2 coiled-coil regions span residues 1171–1252 and 1357–1373; these read TYVQ…AVES and RKLRQNLDALLNQLKSF. A Phosphoserine modification is found at Ser1230. AAA stretches follow at residues 1868 to 2099, 2180 to 2452, 2556 to 2805, and 2899 to 3168; these read YGFE…VLVS, EELK…LTRL, EVET…WVRG, and VFYE…GGRT. Residues 1906–1913 and 2224–2231 contribute to the ATP site; these read GPAGTGKT and GPSGSGKS. Residues 2390–2411 form a disordered region; that stretch reads GEDEAQRRRKGKEDEGEEAASP. ATP-binding positions include 2595-2602 and 2937-2944; these read GPPGSGKT and GVSGAGKT. 3 coiled-coil regions span residues 3189-3275, 3396-3500, and 3737-3800; these read EKRS…ADKQ, AIAQ…KNQM, and EFQL…VSQQ. Residues 3189–3500 form a stalk region; that stretch reads EKRSELEEQQ…KTSETFKNQM (312 aa). The residue at position 3480 (Lys3480) is an N6-acetyllysine. 2 AAA regions span residues 3553–3782 and 4005–4221; these read LSNA…EVTR and AHMF…TVDT. Ser4162 is subject to Phosphoserine. At Lys4283 the chain carries N6-acetyllysine. A Phosphothreonine modification is found at Thr4366. A Phosphoserine modification is found at Ser4368.

The protein belongs to the dynein heavy chain family. Homodimer. The cytoplasmic dynein 1 complex consists of two catalytic heavy chains (HCs) and a number of non-catalytic subunits presented by intermediate chains (ICs), light intermediate chains (LICs) and light chains (LCs); the composition seems to vary in respect to the IC, LIC and LC composition. The heavy chain homodimer serves as a scaffold for the probable homodimeric assembly of the respective non-catalytic subunits. The ICs and LICs bind directly to the HC dimer and dynein LCs assemble on the IC dimer. Interacts with DYNC1LI1; DYNC1LI1 and DYNC1LI2 bind mutually exclusive to DYNC1H1. Interacts with DYNC1LI2; DYNC1LI1 and DYNC1LI2 bind mutually exclusive to DYNC1H1. Interacts with DYNC1I2. Interacts with BICD2. Interacts with isoform 2 of CRACR2A. Interacts with DNALI1.

It is found in the cytoplasm. Its subcellular location is the cytoskeleton. Its function is as follows. Cytoplasmic dynein 1 acts as a motor for the intracellular retrograde motility of vesicles and organelles along microtubules. Dynein has ATPase activity; the force-producing power stroke is thought to occur on release of ADP. Plays a role in mitotic spindle assembly and metaphase plate congression. This chain is Cytoplasmic dynein 1 heavy chain 1, found in Homo sapiens (Human).